The following is a 275-amino-acid chain: Anamorsin homolog (275 aa).

Residues 1–147 (MTSASIHIGS…QSASSAAATG (147 aa)) are N-terminal SAM-like domain. The segment at 148–183 (RINLGGAKTKVKLSLDDDDDDQLIDEDDLLNGGGGM) is linker. Residues Cys203, Cys209, Cys212, and Cys214 each coordinate [2Fe-2S] cluster. The segment at 203–214 (CGGRKACDNCTC) is fe-S binding site A. Residues Cys238, Cys241, Cys249, and Cys252 each contribute to the [4Fe-4S] cluster site. Short sequence motifs (cx2C motif) lie at residues 238-241 (CGNC) and 249-252 (CAGC). The fe-S binding site B stretch occupies residues 238–252 (CGNCAKGDAFRCAGC).

Belongs to the anamorsin family. In terms of assembly, monomer. The cofactor is [2Fe-2S] cluster. [4Fe-4S] cluster is required as a cofactor.

It localises to the cytoplasm. The protein localises to the mitochondrion intermembrane space. In terms of biological role, component of the cytosolic iron-sulfur (Fe-S) protein assembly (CIA) machinery. Required for the maturation of extramitochondrial Fe-S proteins. Part of an electron transfer chain functioning in an early step of cytosolic Fe-S biogenesis, facilitating the de novo assembly of a [4Fe-4S] cluster on the cytosolic Fe-S scaffold complex. Electrons are transferred from NADPH via a FAD- and FMN-containing diflavin oxidoreductase. Together with the diflavin oxidoreductase, also required for the assembly of the diferric tyrosyl radical cofactor of ribonucleotide reductase (RNR), probably by providing electrons for reduction during radical cofactor maturation in the catalytic small subunit. In Thalassiosira pseudonana (Marine diatom), this protein is Anamorsin homolog.